The chain runs to 1196 residues: Nucleolar protein 6 (1196 aa).

2 disordered regions span residues 1 to 75 (MPGK…VKPP) and 1140 to 1196 (KREQ…KALK). Residues 22-31 (HAEDHSDLEH) are compositionally biased toward basic and acidic residues. Positions 1165–1174 (KPKKHRKRKG) are enriched in basic residues.

It belongs to the NRAP family. In terms of assembly, part of the small subunit (SSU) processome, composed of more than 70 proteins and the RNA chaperone small nucleolar RNA (snoRNA) U3.

It is found in the nucleus. It localises to the nucleolus. Its subcellular location is the chromosome. Part of the small subunit (SSU) processome, first precursor of the small eukaryotic ribosomal subunit. During the assembly of the SSU processome in the nucleolus, many ribosome biogenesis factors, an RNA chaperone and ribosomal proteins associate with the nascent pre-rRNA and work in concert to generate RNA folding, modifications, rearrangements and cleavage as well as targeted degradation of pre-ribosomal RNA by the RNA exosome. The polypeptide is Nucleolar protein 6 (Drosophila sechellia (Fruit fly)).